A 182-amino-acid polypeptide reads, in one-letter code: Adenine phosphoribosyltransferase (182 aa).

Belongs to the purine/pyrimidine phosphoribosyltransferase family. In terms of assembly, homodimer.

Its subcellular location is the cytoplasm. The enzyme catalyses AMP + diphosphate = 5-phospho-alpha-D-ribose 1-diphosphate + adenine. It functions in the pathway purine metabolism; AMP biosynthesis via salvage pathway; AMP from adenine: step 1/1. Catalyzes a salvage reaction resulting in the formation of AMP, that is energically less costly than de novo synthesis. This is Adenine phosphoribosyltransferase from Shewanella frigidimarina (strain NCIMB 400).